Reading from the N-terminus, the 579-residue chain is Ribonucleoside-diphosphate reductase small chain (579 aa).

Residues aspartate 130, glutamate 160, and histidine 163 each contribute to the Fe cation site. Tyrosine 167 is an active-site residue. Glutamate 225, glutamate 258, and histidine 261 together coordinate Fe cation. In terms of domain architecture, Fido spans 435-579 (DMTWTLKDVH…VSVFVDQFYR (145 aa)).

The protein belongs to the ribonucleoside diphosphate reductase small chain family. Heterotetramer composed of a homodimer of the large subunit (R1) and a homodimer of the small subunit (R2). Larger multisubunit protein complex are also active, composed of (R1)n(R2)n. Requires Fe cation as cofactor.

It catalyses the reaction a 2'-deoxyribonucleoside 5'-diphosphate + [thioredoxin]-disulfide + H2O = a ribonucleoside 5'-diphosphate + [thioredoxin]-dithiol. In terms of biological role, ribonucleoside-diphosphate reductase holoenzyme provides the precursors necessary for viral DNA synthesis. Allows virus growth in non-dividing cells. Catalyzes the biosynthesis of deoxyribonucleotides from the corresponding ribonucleotides. This is Ribonucleoside-diphosphate reductase small chain from Magallana gigas (Pacific oyster).